Reading from the N-terminus, the 373-residue chain is GTP cyclohydrolase 1 type 2 homolog (373 aa).

Residues H67, H68, D106, H333, and E336 each coordinate a divalent metal cation.

This sequence belongs to the GTP cyclohydrolase I type 2/NIF3 family. As to quaternary structure, homohexamer.

The protein is GTP cyclohydrolase 1 type 2 homolog of Listeria innocua serovar 6a (strain ATCC BAA-680 / CLIP 11262).